We begin with the raw amino-acid sequence, 156 residues long: Small ribosomal subunit protein uS7 (156 aa).

This sequence belongs to the universal ribosomal protein uS7 family. Part of the 30S ribosomal subunit. Contacts proteins S9 and S11.

In terms of biological role, one of the primary rRNA binding proteins, it binds directly to 16S rRNA where it nucleates assembly of the head domain of the 30S subunit. Is located at the subunit interface close to the decoding center, probably blocks exit of the E-site tRNA. This is Small ribosomal subunit protein uS7 from Carboxydothermus hydrogenoformans (strain ATCC BAA-161 / DSM 6008 / Z-2901).